A 104-amino-acid polypeptide reads, in one-letter code: Large ribosomal subunit protein uL24 (104 aa).

It belongs to the universal ribosomal protein uL24 family. As to quaternary structure, part of the 50S ribosomal subunit.

One of two assembly initiator proteins, it binds directly to the 5'-end of the 23S rRNA, where it nucleates assembly of the 50S subunit. Functionally, one of the proteins that surrounds the polypeptide exit tunnel on the outside of the subunit. The polypeptide is Large ribosomal subunit protein uL24 (Photobacterium profundum (strain SS9)).